Consider the following 366-residue polypeptide: Ribosomal RNA large subunit methyltransferase M (366 aa).

S-adenosyl-L-methionine is bound by residues serine 188, 221–224, aspartate 240, aspartate 260, and aspartate 277; that span reads CPGG. Lysine 306 (proton acceptor) is an active-site residue.

The protein belongs to the class I-like SAM-binding methyltransferase superfamily. RNA methyltransferase RlmE family. RlmM subfamily. In terms of assembly, monomer.

It localises to the cytoplasm. It catalyses the reaction cytidine(2498) in 23S rRNA + S-adenosyl-L-methionine = 2'-O-methylcytidine(2498) in 23S rRNA + S-adenosyl-L-homocysteine + H(+). Its function is as follows. Catalyzes the 2'-O-methylation at nucleotide C2498 in 23S rRNA. The sequence is that of Ribosomal RNA large subunit methyltransferase M from Salmonella arizonae (strain ATCC BAA-731 / CDC346-86 / RSK2980).